We begin with the raw amino-acid sequence, 236 residues long: Activating transcription factor of chaperone (236 aa).

Positions 117 to 185 (HRASQLASPQ…KNAATRYRQK (69 aa)) are disordered. Low complexity predominate over residues 120–137 (SQLASPQHSSSSANASPR). Basic and acidic residues predominate over residues 162-175 (RPVDDRRSRKKEQN). In terms of domain architecture, bZIP spans 165 to 228 (DDRRSRKKEQ…RYLKALMRDL (64 aa)). Residues 167–187 (RRSRKKEQNKNAATRYRQKKK) form a basic motif region. Residues 193-228 (LLKEEQTLRQRHTELGEKCSDLQREIRYLKALMRDL) form a leucine-zipper region.

It belongs to the bZIP family. In terms of assembly, binds DNA as a dimer.

It localises to the nucleus. In terms of biological role, transcriptional activator that acts in the unfolded protein response (UPR) pathway. Acts during endoplasmic reticulum (ER) stress by activating UPR target genes via direct binding to the UPR element (UPRE) (5'-GGAACTGGACAGCGTGTCGAAA-3'). Activates expression of ER chaperones ERP72 and PDI. The protein is Activating transcription factor of chaperone of Bombyx mori (Silk moth).